The primary structure comprises 510 residues: ATP synthase subunit alpha (510 aa).

170–177 (GDRQTGKT) provides a ligand contact to ATP.

It belongs to the ATPase alpha/beta chains family. F-type ATPases have 2 components, CF(1) - the catalytic core - and CF(0) - the membrane proton channel. CF(1) has five subunits: alpha(3), beta(3), gamma(1), delta(1), epsilon(1). CF(0) has three main subunits: a(1), b(2) and c(9-12). The alpha and beta chains form an alternating ring which encloses part of the gamma chain. CF(1) is attached to CF(0) by a central stalk formed by the gamma and epsilon chains, while a peripheral stalk is formed by the delta and b chains.

The protein localises to the cell inner membrane. The catalysed reaction is ATP + H2O + 4 H(+)(in) = ADP + phosphate + 5 H(+)(out). Produces ATP from ADP in the presence of a proton gradient across the membrane. The alpha chain is a regulatory subunit. This is ATP synthase subunit alpha from Acidiphilium cryptum (strain JF-5).